Reading from the N-terminus, the 561-residue chain is Arginine--tRNA ligase (561 aa).

Positions 129–139 match the 'HIGH' region motif; sequence ANPTGPLHIGH.

The protein belongs to the class-I aminoacyl-tRNA synthetase family. In terms of assembly, monomer.

The protein resides in the cytoplasm. It catalyses the reaction tRNA(Arg) + L-arginine + ATP = L-arginyl-tRNA(Arg) + AMP + diphosphate. In Geotalea daltonii (strain DSM 22248 / JCM 15807 / FRC-32) (Geobacter daltonii), this protein is Arginine--tRNA ligase.